A 301-amino-acid chain; its full sequence is GTPase Era (301 aa).

Residues 7–175 form the Era-type G domain; it reads YCGFIAIVGR…AAIVRKHLPE (169 aa). The segment at 15-22 is G1; it reads GRPNVGKS. 15–22 contacts GTP; that stretch reads GRPNVGKS. Residues 41–45 form a G2 region; sequence QTTRH. The tract at residues 62 to 65 is G3; that stretch reads DTPG. GTP contacts are provided by residues 62 to 66 and 124 to 127; these read DTPGL and NKVD. The tract at residues 124 to 127 is G4; the sequence is NKVD. The tract at residues 154–156 is G5; that stretch reads ISA. One can recognise a KH type-2 domain in the interval 206 to 283; that stretch reads LGAELPYSVT…HLELWVKVKS (78 aa).

Belongs to the TRAFAC class TrmE-Era-EngA-EngB-Septin-like GTPase superfamily. Era GTPase family. Monomer.

Its subcellular location is the cytoplasm. It is found in the cell inner membrane. Functionally, an essential GTPase that binds both GDP and GTP, with rapid nucleotide exchange. Plays a role in 16S rRNA processing and 30S ribosomal subunit biogenesis and possibly also in cell cycle regulation and energy metabolism. The sequence is that of GTPase Era from Escherichia coli O157:H7.